A 166-amino-acid chain; its full sequence is Packaging efficiency factor P6 (166 aa).

Residues 134–166 (ILPESAGDQQEAEPVPSVGDQQETAPRKRFRAI) are disordered.

Heterodimer of P6 and P9; further multimerizes as hexamers of heterodimers. Part of the dodecameric portal complex that is composed of the packaging efficiency factor P6, the DNA packaging ATPase P9, and the internal heterododecamer P20/P22 which spans the virion inner membrane.

It localises to the virion. In terms of biological role, together with the packaging ATPase P9, forms the external part of the portal vertex that is embeded in the capsid and which plays critical roles in genome packaging and genome ejection. Both proteins multimerize as a single ring-shaped heterdodecamer arranged around a central channel. The chain is Packaging efficiency factor P6 (VI) from Acinetobacter calcoaceticus (Arthrobacter siderocapsulatus).